Consider the following 79-residue polypeptide: Acyl carrier protein (79 aa).

Residues 1-77 (MNNVEKKIKK…KSIDYINNKN (77 aa)) form the Carrier domain. Position 37 is an O-(pantetheine 4'-phosphoryl)serine (Ser-37).

The protein belongs to the acyl carrier protein (ACP) family. Post-translationally, 4'-phosphopantetheine is transferred from CoA to a specific serine of apo-ACP by AcpS. This modification is essential for activity because fatty acids are bound in thioester linkage to the sulfhydryl of the prosthetic group.

It is found in the cytoplasm. It functions in the pathway lipid metabolism; fatty acid biosynthesis. In terms of biological role, carrier of the growing fatty acid chain in fatty acid biosynthesis. The chain is Acyl carrier protein from Buchnera aphidicola subsp. Schizaphis graminum (strain Sg).